The following is a 248-amino-acid chain: Ankyrin repeat domain-containing protein 45 (248 aa).

Composition is skewed to acidic residues over residues 1–10 (MEPEETLESE) and 22–33 (EYEESQEAEETG). Positions 1–42 (MEPEETLESESSEKSLFSSQQEYEESQEAEETGAENPLLQPT) are disordered. ANK repeat units lie at residues 75-104 (VGRN…NLNE) and 108-137 (RGYT…DIEA).

Its subcellular location is the cytoplasm. It is found in the midbody. It localises to the midbody ring. The protein resides in the cleavage furrow. Functionally, may play a role during cell division. In Mus musculus (Mouse), this protein is Ankyrin repeat domain-containing protein 45 (Ankrd45).